Here is a 1382-residue protein sequence, read N- to C-terminus: Ninein-like protein (1382 aa).

2 consecutive EF-hand domains span residues 7–42 and 41–76; these read HYVS…LHLE and LEQQ…VLSS. Residues 144–164 form a disordered region; it reads ASLESVESPKSDEEAESTKEA. Phosphoserine is present on Ser-148. Residues 150 to 164 show a composition bias toward basic and acidic residues; the sequence is ESPKSDEEAESTKEA. 2 EF-hand domains span residues 196-231 and 233-268; these read TPES…VGLQ and LEKE…HEPA. Residues Asp-246, Asp-248, Asp-250, Lys-252, and Glu-257 each coordinate Ca(2+). Coiled coils occupy residues 384-424, 484-579, and 616-699; these read QELS…MDDC, AGLR…WARL, and IETE…QLQD. The short motif at 495-497 is the KEN box element; the sequence is KEN. Residues 633–641 carry the D-box motif; that stretch reads RTQLETKVN. 2 disordered regions span residues 857–969 and 982–1006; these read PLAW…ASCR and RARS…GALE. The span at 991 to 1004 shows a compositional bias: low complexity; that stretch reads QEQASEQQARAEGA. Positions 1046 to 1375 form a coiled coil; that stretch reads ETKIALEREK…RALNKLVSRI (330 aa).

In terms of assembly, interacts with gamma-tubulin and TUBGCP4. Interacts with anaphase promoting complex/cyclosome (APC/C). Interacts with CDC20 and FZR1. Isoform 2 interacts with LCA5 and USH2A. Isoform 2 interacts with DZANK1. Post-translationally, phosphorylated by PLK1 which disrupts its centrosome association and interaction with gamma-tubulin. Ubiquitinated by the APC/C complex leading to its degradation. Expressed in KYSE-150 esophageal carcinoma, HeLa cervical carcinoma and U2OS osteosarcoma cells. Expression is regulated in a cell cycle-dependent manner and peaks during G2/M phase (at protein level). Expressed in fetal heart, skeletal muscle, liver, lung and cochlea, and in adult brain, testis, kidney and retina.

The protein resides in the cytoplasm. Its subcellular location is the cytoskeleton. It localises to the microtubule organizing center. The protein localises to the centrosome. Its function is as follows. Involved in the microtubule organization in interphase cells. Overexpression induces the fragmentation of the Golgi, and causes lysosomes to disperse toward the cell periphery; it also interferes with mitotic spindle assembly. Involved in vesicle transport in photoreceptor cells. May play a role in ovarian carcinogenesis. This is Ninein-like protein (NINL) from Homo sapiens (Human).